The primary structure comprises 364 residues: Developmentally-regulated GTP-binding protein 2 (364 aa).

The residue at position 21 (K21) is a (3S)-3-hydroxylysine. The region spanning 63–288 is the OBG-type G domain; sequence ARVALIGFPS…LLEMLWEYLA (226 aa). GTP-binding positions include 69-76, 94-98, 115-118, 246-249, and 269-271; these read GFPSVGKS, FTTLT, DLPG, NKID, and SCG. S76 and T96 together coordinate Mg(2+). One can recognise a TGS domain in the interval 288–363; sequence ALTCIYTKKR…EHEDVIQIVK (76 aa).

It belongs to the TRAFAC class OBG-HflX-like GTPase superfamily. OBG GTPase family. As to quaternary structure, interacts with RWDD1; this interaction confers protection to polyubiquitination and proteolytic degradation. Interacts with JMJD7; this interaction is direct. Requires Mg(2+) as cofactor. Post-translationally, hydroxylated (with S stereochemistry) at C-3 of Lys-21 by JMJD7; this modification hinders trypsin-catalyzed proteolysis in vitro. Polyubiquitinated. As to expression, highest levels in skeletal muscle, heart and kidney. Low levels in colon, thymus, spleen, small intestine, lung and Leukocytes.

The protein resides in the nucleus. It localises to the cytoplasm. The catalysed reaction is GTP + H2O = GDP + phosphate + H(+). Functionally, catalyzes the conversion of GTP to GDP through hydrolysis of the gamma-phosphate bond in GTP. When hydroxylated at C-3 of 'Lys-21' by JMJD7, may bind to RNA and play a role in translation. This chain is Developmentally-regulated GTP-binding protein 2, found in Homo sapiens (Human).